The primary structure comprises 511 residues: Ribonuclease Y (511 aa).

The chain crosses the membrane as a helical span at residues 2 to 22 (ITTVIIAIVCFAVGGGLSYML). Residues 201–261 (SVTVFHIESD…VRREIARLAL (61 aa)) enclose the KH domain. The 94-residue stretch at 327–420 (LLQHARETAN…VQVCDAISGA (94 aa)) folds into the HD domain.

Belongs to the RNase Y family.

It localises to the cell membrane. Functionally, endoribonuclease that initiates mRNA decay. This is Ribonuclease Y from Phocaeicola vulgatus (strain ATCC 8482 / DSM 1447 / JCM 5826 / CCUG 4940 / NBRC 14291 / NCTC 11154) (Bacteroides vulgatus).